The sequence spans 66 residues: Alpha-conotoxin RegIIA (66 aa).

A signal peptide spans Met1–Ser21. A propeptide spanning residues Ser22–Arg49 is cleaved from the precursor. 2 disulfides stabilise this stretch: Cys51–Cys57 and Cys52–Cys65. Positions Ser53 to Pro55 are ser-Xaa-Pro motif, crucial for potent interaction with nAChR. Cys65 carries the cysteine amide modification.

Belongs to the conotoxin A superfamily. As to expression, expressed by the venom duct.

Its subcellular location is the secreted. Alpha-conotoxins act on postsynaptic membranes, they bind to the nicotinic acetylcholine receptors (nAChR) and thus inhibit them. This toxin potently inhibits alpha-3 containing subunit nAChR. It inhibits alpha-3-beta-2/CHRNA3-CHRNB2 (IC(50)=10.7-33 nM (rat)/132.4-704.1 nM (human)) and alpha-3-beta-4/CHRNA3-CHRNB4 (IC(50)=47.3-97 nM (rat)/52.1 nM (human)). It also inhibits alpha-7/CHRNA7 nAChR with IC(50)=103-210 nM (human)/41-61.2 nM (rat) nAChRs. It is more potent on alpha-3-beta-2 receptors in human than in rat, due to a variation (Pro vs Gln) in alpha-3 subunit in these orthologs. Conversely, does not show species-specific differences in sensitivity at the alpha-3-beta-4 receptor. The protein is Alpha-conotoxin RegIIA of Conus regius (Crown cone).